The primary structure comprises 1155 residues: DNA-directed RNA polymerase subunit beta (1155 aa).

The protein belongs to the RNA polymerase beta chain family. In terms of assembly, the RNAP catalytic core consists of 2 alpha, 1 beta, 1 beta' and 1 omega subunit. When a sigma factor is associated with the core the holoenzyme is formed, which can initiate transcription.

The enzyme catalyses RNA(n) + a ribonucleoside 5'-triphosphate = RNA(n+1) + diphosphate. In terms of biological role, DNA-dependent RNA polymerase catalyzes the transcription of DNA into RNA using the four ribonucleoside triphosphates as substrates. The protein is DNA-directed RNA polymerase subunit beta of Borrelia garinii subsp. bavariensis (strain ATCC BAA-2496 / DSM 23469 / PBi) (Borreliella bavariensis).